Reading from the N-terminus, the 122-residue chain is Small ribosomal subunit protein uS13 (122 aa).

The segment at 95-122 is disordered; sequence GLPVRGQKTKTNARTRKGPKRTVANKKK.

It belongs to the universal ribosomal protein uS13 family. As to quaternary structure, part of the 30S ribosomal subunit. Forms a loose heterodimer with protein S19. Forms two bridges to the 50S subunit in the 70S ribosome.

In terms of biological role, located at the top of the head of the 30S subunit, it contacts several helices of the 16S rRNA. In the 70S ribosome it contacts the 23S rRNA (bridge B1a) and protein L5 of the 50S subunit (bridge B1b), connecting the 2 subunits; these bridges are implicated in subunit movement. Contacts the tRNAs in the A and P-sites. In Agathobacter rectalis (strain ATCC 33656 / DSM 3377 / JCM 17463 / KCTC 5835 / VPI 0990) (Eubacterium rectale), this protein is Small ribosomal subunit protein uS13.